A 444-amino-acid polypeptide reads, in one-letter code: Phosphoglucosamine mutase (444 aa).

S102 functions as the Phosphoserine intermediate in the catalytic mechanism. Residues S102, D241, D243, and D245 each contribute to the Mg(2+) site. S102 carries the post-translational modification Phosphoserine.

It belongs to the phosphohexose mutase family. Mg(2+) serves as cofactor. Activated by phosphorylation.

It catalyses the reaction alpha-D-glucosamine 1-phosphate = D-glucosamine 6-phosphate. Its function is as follows. Catalyzes the conversion of glucosamine-6-phosphate to glucosamine-1-phosphate. This chain is Phosphoglucosamine mutase, found in Acidovorax sp. (strain JS42).